The primary structure comprises 116 residues: Proline-rich protein 9 (116 aa).

The polypeptide is Proline-rich protein 9 (PRR9) (Homo sapiens (Human)).